The following is a 280-amino-acid chain: B3 domain-containing protein At5g25470 (280 aa).

Residues 20–114 (WKSLSPGQNW…FLEVQIFKND (95 aa)) constitute a DNA-binding region (TF-B3 1). The interval 122-153 (PPEVEPETEPFHPTTPKNSHKETTTASASASA) is disordered. A DNA-binding region (TF-B3 2) is located at residues 183–276 (YFVKTLTKGN…ELVTAVRVHF (94 aa)).

It is found in the nucleus. The sequence is that of B3 domain-containing protein At5g25470 from Arabidopsis thaliana (Mouse-ear cress).